The chain runs to 470 residues: 6-phospho-beta-galactosidase (470 aa).

D-galactose 6-phosphate is bound by residues glutamine 19, histidine 116, asparagine 159, glutamate 160, and asparagine 297. Glutamate 160 serves as the catalytic Proton donor. Glutamate 375 serves as the catalytic Nucleophile. The D-galactose 6-phosphate site is built by serine 430, tryptophan 431, lysine 437, and tyrosine 439.

This sequence belongs to the glycosyl hydrolase 1 family.

The enzyme catalyses a 6-phospho-beta-D-galactoside + H2O = D-galactose 6-phosphate + an alcohol. The protein operates within carbohydrate metabolism; lactose degradation; D-galactose 6-phosphate and beta-D-glucose from lactose 6-phosphate: step 1/1. This chain is 6-phospho-beta-galactosidase, found in Staphylococcus aureus (strain Mu3 / ATCC 700698).